A 184-amino-acid polypeptide reads, in one-letter code: uncharacterized protein (184 aa).

Residues 5-27 traverse the membrane as a helical segment; that stretch reads YLLATAMFLIVCVYVISETVNLH.

The protein localises to the membrane. This is an uncharacterized protein from Methanocaldococcus jannaschii (strain ATCC 43067 / DSM 2661 / JAL-1 / JCM 10045 / NBRC 100440) (Methanococcus jannaschii).